We begin with the raw amino-acid sequence, 323 residues long: Glucokinase (323 aa).

Residue 8–13 (GDVGGT) coordinates ATP.

Belongs to the bacterial glucokinase family.

It is found in the cytoplasm. It carries out the reaction D-glucose + ATP = D-glucose 6-phosphate + ADP + H(+). This is Glucokinase from Yersinia enterocolitica serotype O:8 / biotype 1B (strain NCTC 13174 / 8081).